The primary structure comprises 544 residues: Probable protein kinase UbiB (544 aa).

The Protein kinase domain occupies aspartate 123–leucine 501. Residues leucine 129–valine 137 and lysine 152 contribute to the ATP site. Residue aspartate 287 is the Proton acceptor of the active site. A run of 2 helical transmembrane segments spans residues glycine 496–isoleucine 516 and glutamine 519–tryptophan 539.

This sequence belongs to the ABC1 family. UbiB subfamily.

It localises to the cell inner membrane. The protein operates within cofactor biosynthesis; ubiquinone biosynthesis [regulation]. In terms of biological role, is probably a protein kinase regulator of UbiI activity which is involved in aerobic coenzyme Q (ubiquinone) biosynthesis. This Vibrio cholerae serotype O1 (strain ATCC 39315 / El Tor Inaba N16961) protein is Probable protein kinase UbiB.